Reading from the N-terminus, the 128-residue chain is Anion exchange transporter (128 aa).

Residues 1 to 14 (LFSFKELNEQFKRK) are Extracellular-facing. The helical transmembrane segment at 15 to 35 (IKVVLPVDLVLIIAASFACYC) threads the bilayer. The Cytoplasmic segment spans residues 36-66 (TNMENTYGLEVVGHIPRGIPPPRAPPMNILS). Residues 67 to 87 (AVITEAFGVALVGYAASLALA) traverse the membrane as a helical segment. At 88–103 (QGSAKKFKYSVDDNQE) the chain is on the extracellular side. The helical transmembrane segment at 104 to 124 (FLAHGLSNVISSFLFCIPSAA) threads the bilayer. The Cytoplasmic segment spans residues 125–128 (AMGR).

It belongs to the SLC26A/SulP transporter (TC 2.A.53) family. In terms of tissue distribution, expressed in gastric epithelium, predominantly in the gastric parietal cells but also at lower levels in mucosal cells.

It is found in the basolateral cell membrane. Its subcellular location is the recycling endosome membrane. The protein localises to the apical cell membrane. It localises to the lateral cell membrane. It carries out the reaction chloride(in) = chloride(out). The enzyme catalyses iodide(out) = iodide(in). The catalysed reaction is bromide(in) = bromide(out). It catalyses the reaction oxalate(in) = oxalate(out). It carries out the reaction nitrate(in) = nitrate(out). The enzyme catalyses sulfate(in) = sulfate(out). The catalysed reaction is D-gluconate(in) = D-gluconate(out). It catalyses the reaction thiocyanate(in) = thiocyanate(out). It carries out the reaction hydrogencarbonate(in) = hydrogencarbonate(out). The enzyme catalyses hydrogencarbonate(in) + chloride(out) = hydrogencarbonate(out) + chloride(in). Functionally, acts as an anion channel mediating the transport of chloride, bromide, iodide, nitrate, sulfate, gluconate, thiocyanate, oxalate and bicarbonate ions. Its permeability towards bicarbonate is weak and increases when pH is above 7. Mediates thiocyanate transport in retinal pigment epithelium cells. Mediates iodide transport in the thyroid gland, playing an important role in the synthesis of thyroid hormones and the maintenance of thyroid function. The sequence is that of Anion exchange transporter from Oryctolagus cuniculus (Rabbit).